The sequence spans 181 residues: GTPase RhebL1 (181 aa).

GTP is bound by residues Leu30–Thr36, Gly61, Asn117–Asp120, and Ser147–Ala148. The short motif at Tyr33–Tyr41 is the Effector region element. Mg(2+) is bound at residue Thr36. The residue at position 178 (Cys178) is a Cysteine methyl ester. The S-farnesyl cysteine moiety is linked to residue Cys178. A propeptide spans His179–Met181 (removed in mature form).

It belongs to the small GTPase superfamily. Rheb family. As to quaternary structure, interacts with MTOR.

The protein localises to the endomembrane system. It localises to the cytoplasm. It carries out the reaction GTP + H2O = GDP + phosphate + H(+). Binds GTP and exhibits intrinsic GTPase activity. May activate NF-kappa-B-mediated gene transcription. Promotes signal transduction through MTOR, activates RPS6KB1, and is a downstream target of the small GTPase-activating proteins TSC1 and TSC2. The chain is GTPase RhebL1 (RHEBL1) from Bos taurus (Bovine).